Reading from the N-terminus, the 277-residue chain is Putative phosphoenolpyruvate synthase regulatory protein (277 aa).

G157–T164 contributes to the ADP binding site.

Belongs to the pyruvate, phosphate/water dikinase regulatory protein family. PSRP subfamily.

It carries out the reaction [pyruvate, water dikinase] + ADP = [pyruvate, water dikinase]-phosphate + AMP + H(+). It catalyses the reaction [pyruvate, water dikinase]-phosphate + phosphate + H(+) = [pyruvate, water dikinase] + diphosphate. Bifunctional serine/threonine kinase and phosphorylase involved in the regulation of the phosphoenolpyruvate synthase (PEPS) by catalyzing its phosphorylation/dephosphorylation. This chain is Putative phosphoenolpyruvate synthase regulatory protein, found in Vibrio cholerae serotype O1 (strain ATCC 39541 / Classical Ogawa 395 / O395).